We begin with the raw amino-acid sequence, 218 residues long: Adenylate kinase (218 aa).

An ATP-binding site is contributed by 10 to 15 (GAGKGT). Residues 30 to 59 (STGDMLRAAVKAGTPLGIEAKKVMDAGGLM) are NMP. Residues Thr31, Arg36, 57–59 (GLM), 85–88 (GYPR), and Gln92 each bind AMP. The segment at 122-159 (GRWVHLASGRSYNTQSNPPKVAGQDDITGEALIQRDDD) is LID. ATP is bound by residues Arg123 and 132-133 (SY). AMP contacts are provided by Arg156 and Arg167. ATP is bound at residue Gly203.

This sequence belongs to the adenylate kinase family. In terms of assembly, monomer.

It is found in the cytoplasm. The enzyme catalyses AMP + ATP = 2 ADP. The protein operates within purine metabolism; AMP biosynthesis via salvage pathway; AMP from ADP: step 1/1. In terms of biological role, catalyzes the reversible transfer of the terminal phosphate group between ATP and AMP. Plays an important role in cellular energy homeostasis and in adenine nucleotide metabolism. In Bordetella avium (strain 197N), this protein is Adenylate kinase.